The following is a 194-amino-acid chain: Oligoribonuclease (194 aa).

The 164-residue stretch at 11-174 (LIWIDLEMTG…SDVRDSIDEL (164 aa)) folds into the Exonuclease domain. Residue Tyr-132 is part of the active site.

It belongs to the oligoribonuclease family.

It localises to the cytoplasm. In terms of biological role, 3'-to-5' exoribonuclease specific for small oligoribonucleotides. This is Oligoribonuclease from Xanthomonas campestris pv. campestris (strain ATCC 33913 / DSM 3586 / NCPPB 528 / LMG 568 / P 25).